The chain runs to 195 residues: Pyruvoyl-dependent arginine decarboxylase AaxB (195 aa).

Ser53 bears the Pyruvic acid (Ser) mark.

This sequence belongs to the pyruvoyl-dependent arginine decarboxylase family. Trimer of an alpha-beta dimer. Requires pyruvate as cofactor.

Its subcellular location is the cytoplasm. The catalysed reaction is L-arginine + H(+) = agmatine + CO2. With respect to regulation, inhibited by argininamide. Its function is as follows. Part of the AaxABC system, catalyzes the decarboxylation of L-arginine. The arginine uptake by the bacterium in the macrophage may be a virulence factor against the host innate immune response. The sequence is that of Pyruvoyl-dependent arginine decarboxylase AaxB (aaxB) from Chlamydia pneumoniae (Chlamydophila pneumoniae).